Here is an 80-residue protein sequence, read N- to C-terminus: UPF0270 protein VFMJ11_0205 (80 aa).

Belongs to the UPF0270 family.

The polypeptide is UPF0270 protein VFMJ11_0205 (Aliivibrio fischeri (strain MJ11) (Vibrio fischeri)).